A 385-amino-acid chain; its full sequence is Probable threonine protease PRSS50 (385 aa).

Positions 1–39 are cleaved as a signal peptide; the sequence is MGRWCQTVARGQRPRTSAPSRAGALLLLLLLLRSAGCWG. A Peptidase S1 domain is found at 93–358; it reads VSEGKVDPYR…YQHWIWDCLN (266 aa). Asparagine 133 carries N-linked (GlcNAc...) asparagine glycosylation. A disulfide bridge connects residues cysteine 138 and cysteine 154. Catalysis depends on charge relay system residues histidine 153 and aspartate 206. Cystine bridges form between cysteine 240–cysteine 316, cysteine 273–cysteine 296, and cysteine 306–cysteine 334. The N-linked (GlcNAc...) asparagine glycan is linked to asparagine 279. Catalysis depends on threonine 310, which acts as the Charge relay system.

Belongs to the peptidase S1 family. In terms of tissue distribution, testis specific. Differentially expressed in some breast cancer tissues.

It localises to the endoplasmic reticulum. May be involved in proteolysis through its threonine endopeptidase activity. This Homo sapiens (Human) protein is Probable threonine protease PRSS50 (PRSS50).